The sequence spans 433 residues: Divergent protein kinase domain 2B (433 aa).

Positions 1 to 31 (MEPQLGPEAAALRPGWLALLLWVSALSCSFS) are cleaved as a signal peptide. Residue Asn100 is glycosylated (N-linked (GlcNAc...) asparagine).

It belongs to the DIPK family.

It localises to the secreted. The protein is Divergent protein kinase domain 2B of Homo sapiens (Human).